A 45-amino-acid chain; its full sequence is Large ribosomal subunit protein bL34 (45 aa).

2 stretches are compositionally biased toward basic residues: residues 1 to 15 and 22 to 45; these read MKAK…RKRA and MKTK…IAIK. Positions 1-45 are disordered; that stretch reads MKAKSHLSNKKRKRASGFLARMKTKAGRKILARRRAKGRKRIAIK.

Belongs to the bacterial ribosomal protein bL34 family.

This is Large ribosomal subunit protein bL34 from Sulfurihydrogenibium sp. (strain YO3AOP1).